We begin with the raw amino-acid sequence, 527 residues long: Dual specificity protein kinase shkA (527 aa).

Positions 45–304 (ITTESILGDG…GIVSELEEII (260 aa)) constitute a Protein kinase domain. ATP-binding positions include 51 to 59 (LGDGSFGTV) and Lys72. Asp167 serves as the catalytic Proton acceptor. The SH2 domain maps to 424-513 (WFHGDISTSE…INTPCLGSRF (90 aa)).

Belongs to the protein kinase superfamily. TKL Ser/Thr protein kinase family. SH2 domain-containing protein kinase subfamily.

It localises to the membrane. The catalysed reaction is L-seryl-[protein] + ATP = O-phospho-L-seryl-[protein] + ADP + H(+). The enzyme catalyses L-threonyl-[protein] + ATP = O-phospho-L-threonyl-[protein] + ADP + H(+). Functionally, required for proper chemotaxis and phagocytosis; proper spatiotemporal control of F-actin levels in chemotaxing cells. Negative regulator of the PI3K (phosphatidylinositol 3 kinase) pathway. Predominantly phosphorylates serines and threonines and tyrosines at a lower level. The protein is Dual specificity protein kinase shkA (shkA) of Dictyostelium discoideum (Social amoeba).